A 154-amino-acid polypeptide reads, in one-letter code: 6,7-dimethyl-8-ribityllumazine synthase (154 aa).

5-amino-6-(D-ribitylamino)uracil-binding positions include phenylalanine 22, 56-58 (AFE), and 80-82 (AVI). 85–86 (ET) contributes to the (2S)-2-hydroxy-3-oxobutyl phosphate binding site. Histidine 88 serves as the catalytic Proton donor. Phenylalanine 113 provides a ligand contact to 5-amino-6-(D-ribitylamino)uracil. Residue arginine 127 participates in (2S)-2-hydroxy-3-oxobutyl phosphate binding.

Belongs to the DMRL synthase family.

It catalyses the reaction (2S)-2-hydroxy-3-oxobutyl phosphate + 5-amino-6-(D-ribitylamino)uracil = 6,7-dimethyl-8-(1-D-ribityl)lumazine + phosphate + 2 H2O + H(+). Its pathway is cofactor biosynthesis; riboflavin biosynthesis; riboflavin from 2-hydroxy-3-oxobutyl phosphate and 5-amino-6-(D-ribitylamino)uracil: step 1/2. Functionally, catalyzes the formation of 6,7-dimethyl-8-ribityllumazine by condensation of 5-amino-6-(D-ribitylamino)uracil with 3,4-dihydroxy-2-butanone 4-phosphate. This is the penultimate step in the biosynthesis of riboflavin. This Thermoanaerobacter pseudethanolicus (strain ATCC 33223 / 39E) (Clostridium thermohydrosulfuricum) protein is 6,7-dimethyl-8-ribityllumazine synthase.